We begin with the raw amino-acid sequence, 354 residues long: Holliday junction branch migration complex subunit RuvB (354 aa).

The large ATPase domain (RuvB-L) stretch occupies residues 1 to 183 (MTGDNLVSAY…FGFVAHLDFY (183 aa)). ATP is bound by residues arginine 23, glycine 64, lysine 67, threonine 68, serine 69, 130–132 (EDF), arginine 173, tyrosine 183, and arginine 220. Threonine 68 provides a ligand contact to Mg(2+). The segment at 184–254 (SPADLETLLN…TAQAALTVYD (71 aa)) is small ATPAse domain (RuvB-S). A head domain (RuvB-H) region spans residues 257–354 (ALGLDRLDRA…DLFSVEPDQP (98 aa)). DNA-binding residues include arginine 312 and arginine 317.

This sequence belongs to the RuvB family. As to quaternary structure, homohexamer. Forms an RuvA(8)-RuvB(12)-Holliday junction (HJ) complex. HJ DNA is sandwiched between 2 RuvA tetramers; dsDNA enters through RuvA and exits via RuvB. An RuvB hexamer assembles on each DNA strand where it exits the tetramer. Each RuvB hexamer is contacted by two RuvA subunits (via domain III) on 2 adjacent RuvB subunits; this complex drives branch migration. In the full resolvosome a probable DNA-RuvA(4)-RuvB(12)-RuvC(2) complex forms which resolves the HJ.

It is found in the cytoplasm. The enzyme catalyses ATP + H2O = ADP + phosphate + H(+). Functionally, the RuvA-RuvB-RuvC complex processes Holliday junction (HJ) DNA during genetic recombination and DNA repair, while the RuvA-RuvB complex plays an important role in the rescue of blocked DNA replication forks via replication fork reversal (RFR). RuvA specifically binds to HJ cruciform DNA, conferring on it an open structure. The RuvB hexamer acts as an ATP-dependent pump, pulling dsDNA into and through the RuvAB complex. RuvB forms 2 homohexamers on either side of HJ DNA bound by 1 or 2 RuvA tetramers; 4 subunits per hexamer contact DNA at a time. Coordinated motions by a converter formed by DNA-disengaged RuvB subunits stimulates ATP hydrolysis and nucleotide exchange. Immobilization of the converter enables RuvB to convert the ATP-contained energy into a lever motion, pulling 2 nucleotides of DNA out of the RuvA tetramer per ATP hydrolyzed, thus driving DNA branch migration. The RuvB motors rotate together with the DNA substrate, which together with the progressing nucleotide cycle form the mechanistic basis for DNA recombination by continuous HJ branch migration. Branch migration allows RuvC to scan DNA until it finds its consensus sequence, where it cleaves and resolves cruciform DNA. This Salinispora tropica (strain ATCC BAA-916 / DSM 44818 / JCM 13857 / NBRC 105044 / CNB-440) protein is Holliday junction branch migration complex subunit RuvB.